A 392-amino-acid polypeptide reads, in one-letter code: Putative non-inhibitory serpin-10 (392 aa).

Positions Gly333–Arg357 are RCL.

It belongs to the serpin family.

The sequence is that of Putative non-inhibitory serpin-10 from Oryza sativa subsp. japonica (Rice).